We begin with the raw amino-acid sequence, 205 residues long: Small ribosomal subunit protein uS4 (205 aa).

In terms of domain architecture, S4 RNA-binding spans 94-157 (SRLDTVVYRM…KQIALIQESI (64 aa)).

Belongs to the universal ribosomal protein uS4 family. In terms of assembly, part of the 30S ribosomal subunit. Contacts protein S5. The interaction surface between S4 and S5 is involved in control of translational fidelity.

Functionally, one of the primary rRNA binding proteins, it binds directly to 16S rRNA where it nucleates assembly of the body of the 30S subunit. In terms of biological role, with S5 and S12 plays an important role in translational accuracy. The polypeptide is Small ribosomal subunit protein uS4 (Rickettsia canadensis (strain McKiel)).